A 419-amino-acid chain; its full sequence is MLGILTFILVFGIIVVVHEFGHFYFAKKSGILVREFAIGMGPKIFAHIGKDGTAYTIRILPLGGYVRMAGWGDDTTEIKTGTPVSLTLADDGKVKRINLSGKKLDQTALPMQVTQFDFEDKLFIKGLVLEEEKTFAVDHDATVVEADGTEVRIAPLDVQYQNATIWGKLITNFAGPMNNFILGVVVFWVLIFMQGGVRDVDTNQFHIMPQGALAKVGVPEMAQITKIGSHEVSNWESLIQAVETETKDKTAPTLDVTISEKGSDKQVTVTPKDSQGRYLLGVQPGVKSDFLSMFVGGFTTAADSALRILSALKNLIFQPDLNKLGGPVAIFKASSDAAKNGIENILYFLAMISINIGIFNLIPIPALDGGKIVLNILEAIRRKPLKQEIETYVTLAGVVIMVVLMIAVTWNDIMRLFFR.

His18 is a Zn(2+) binding site. The active site involves Glu19. Residue His22 coordinates Zn(2+). Helical transmembrane passes span 169–191 (LITNFAGPMNNFILGVVVFWVLI), 345–367 (ILYFLAMISINIGIFNLIPIPAL), and 388–410 (EIETYVTLAGVVIMVVLMIAVTW).

The protein belongs to the peptidase M50B family. Zn(2+) is required as a cofactor.

It is found in the cell membrane. The sequence is that of Putative zinc metalloprotease SP_0263 from Streptococcus pneumoniae serotype 4 (strain ATCC BAA-334 / TIGR4).